We begin with the raw amino-acid sequence, 913 residues long: DNA mismatch repair protein MutS (913 aa).

Glycine 720 to serine 727 contributes to the ATP binding site.

This sequence belongs to the DNA mismatch repair MutS family.

Functionally, this protein is involved in the repair of mismatches in DNA. It is possible that it carries out the mismatch recognition step. This protein has a weak ATPase activity. This is DNA mismatch repair protein MutS from Prochlorococcus marinus (strain AS9601).